Reading from the N-terminus, the 475-residue chain is Eukaryotic translation initiation factor 2 subunit 3 (475 aa).

In terms of domain architecture, tr-type G spans 38–247 (QATINIGTIG…IVNKIPVPPR (210 aa)). A G1 region spans residues 47 to 54 (GHVAHGKS). 50–55 (AHGKST) provides a ligand contact to GTP. Residues 75–79 (NITIK) form a G2 region. The tract at residues 133–136 (DCPG) is G3. GTP-binding positions include 189-192 (NKID) and 224-226 (SAQ). The interval 189-192 (NKID) is G4. Residues 224 to 226 (SAQ) form a G5 region. An interacts with CDC123 region spans residues 456-468 (GQIFGGKTITPVL).

Belongs to the TRAFAC class translation factor GTPase superfamily. Classic translation factor GTPase family. EIF2G subfamily. As to quaternary structure, eukaryotic translation initiation factor 2 eIF2 is a heterotrimeric complex composed of an alpha, a beta and a gamma subunit. The factors eIF-1, eIF-2, eIF-3, TIF5/eIF-5 and methionyl-tRNAi form a multifactor complex (MFC) that may bind to the 40S ribosome.

The protein localises to the cytoplasm. It localises to the cytosol. The catalysed reaction is GTP + H2O = GDP + phosphate + H(+). As a subunit of eukaryotic initiation factor 2 eIF2, involved in the early steps of protein synthesis. In the presence of GTP, eIF-2 forms a ternary complex with initiator tRNA Met-tRNAi and then recruits the 40S ribosomal complex and initiation factors eIF-1, eIF-1A and eIF-3 to form the 43S pre-initiation complex (43S PIC), a step that determines the rate of protein translation. The 43S PIC binds to mRNA and scans downstream to the initiation codon, where it forms a 48S initiation complex by codon-anticodon base pairing. This leads to the displacement of eIF-1 to allow GTPase-activating protein (GAP) eIF-5-mediated hydrolysis of eIF2-bound GTP. Hydrolysis of GTP and release of Pi, which makes GTP hydrolysis irreversible, causes the release of the eIF-2-GDP binary complex from the 40S subunit, an event that is essential for the subsequent joining of the 60S ribosomal subunit to form an elongation-competent 80S ribosome. In order for eIF-2 to recycle and catalyze another round of initiation, the GDP bound to eIF-2 must be exchanged with GTP by way of a reaction catalyzed by GDP-GTP exchange factor (GEF) eIF-2B. The chain is Eukaryotic translation initiation factor 2 subunit 3 from Drosophila melanogaster (Fruit fly).